Reading from the N-terminus, the 728-residue chain is 1,4-alpha-glucan branching enzyme GlgB (728 aa).

Catalysis depends on Asp-405, which acts as the Nucleophile. Glu-458 (proton donor) is an active-site residue.

Belongs to the glycosyl hydrolase 13 family. GlgB subfamily. In terms of assembly, monomer.

The enzyme catalyses Transfers a segment of a (1-&gt;4)-alpha-D-glucan chain to a primary hydroxy group in a similar glucan chain.. The protein operates within glycan biosynthesis; glycogen biosynthesis. Functionally, catalyzes the formation of the alpha-1,6-glucosidic linkages in glycogen by scission of a 1,4-alpha-linked oligosaccharide from growing alpha-1,4-glucan chains and the subsequent attachment of the oligosaccharide to the alpha-1,6 position. This is 1,4-alpha-glucan branching enzyme GlgB from Escherichia coli O6:K15:H31 (strain 536 / UPEC).